The chain runs to 443 residues: SURP and G-patch domain-containing protein 1-like protein (443 aa).

2 disordered regions span residues 45-71 and 83-141; these read IISN…KGGK and LAPP…TVKK. One copy of the SURP motif repeat lies at 142–185; that stretch reads VADKLASFVAKHGRPFEHITRQKNPGDTPFKFLFDENCADYKYY. 3 disordered regions span residues 198 to 221, 241 to 272, and 285 to 325; these read QTKD…AIPL, TPVE…RGAD, and AQEE…HHMG. Residues 248–265 are compositionally biased toward polar residues; that stretch reads SSRSAQASITRPSDSDSF. Residues 285 to 300 show a composition bias toward basic and acidic residues; sequence AQEEKMRRPRQSKDEM. Residues 307–316 show a composition bias toward polar residues; it reads QGPSETSSTD. The region spanning 360–407 is the G-patch domain; it reads ADNVGHKLLSKMGWKEGEGIGSSRKGMADPIMAGDVKTNNLGVGASAP.

The protein localises to the nucleus. The sequence is that of SURP and G-patch domain-containing protein 1-like protein from Arabidopsis thaliana (Mouse-ear cress).